A 338-amino-acid chain; its full sequence is MSTLRLLISDSYDPWFNLAVEECIFRQMPATQRVLFLWRNADTVVIGRAQNPWKECNTRRMEEDNVRLARRSSGGGAVFHDLGNTCFTFMAGKPEYDKTISTSIVLNALNALGVSAEASGRNDLVVKTAEGDRKVSGSAYRETKDRGFHHGTLLLNADLSRLANYLNPDKKKLAAKGITSVRSRVTNLTELLPGITHEQVCEAITKAFFAHYGERVEAEIISPDKTPDLPNFAETFARQSSWEWNFGQAPAFSHLLDERFSWGGVELHFDVEKGHITRAQVFTDSLNPAPLEALTGRLQGGLYRADMLQQECEALLVDFPDQEKELRELSTWIAGAVR.

One can recognise a BPL/LPL catalytic domain in the interval 29–216; it reads PATQRVLFLW…AFFAHYGERV (188 aa). Residues arginine 71, 76 to 79, and lysine 134 contribute to the ATP site; that span reads GAVF. Lysine 134 serves as a coordination point for (R)-lipoate.

Belongs to the LplA family. As to quaternary structure, monomer.

It is found in the cytoplasm. It catalyses the reaction L-lysyl-[lipoyl-carrier protein] + (R)-lipoate + ATP = N(6)-[(R)-lipoyl]-L-lysyl-[lipoyl-carrier protein] + AMP + diphosphate + H(+). It functions in the pathway protein modification; protein lipoylation via exogenous pathway; protein N(6)-(lipoyl)lysine from lipoate: step 1/2. The protein operates within protein modification; protein lipoylation via exogenous pathway; protein N(6)-(lipoyl)lysine from lipoate: step 2/2. Its function is as follows. Catalyzes both the ATP-dependent activation of exogenously supplied lipoate to lipoyl-AMP and the transfer of the activated lipoyl onto the lipoyl domains of lipoate-dependent enzymes. This is Lipoate-protein ligase A from Escherichia coli (strain 55989 / EAEC).